The sequence spans 554 residues: CTP synthase (554 aa).

The tract at residues 1 to 265 (MTPLIFVTGG…DELVIDQFKL (265 aa)) is amidoligase domain. Serine 13 serves as a coordination point for CTP. Serine 13 serves as a coordination point for UTP. ATP is bound by residues 14 to 19 (SLGKGI) and aspartate 71. Mg(2+)-binding residues include aspartate 71 and glutamate 139. CTP contacts are provided by residues 146-148 (DIE), 186-191 (KTKPTQ), and lysine 222. UTP is bound by residues 186-191 (KTKPTQ) and lysine 222. In terms of domain architecture, Glutamine amidotransferase type-1 spans 292 to 545 (NIAVVGKYVD…VRAAREKKAG (254 aa)). Glycine 353 provides a ligand contact to L-glutamine. Cysteine 380 functions as the Nucleophile; for glutamine hydrolysis in the catalytic mechanism. L-glutamine-binding positions include 381-384 (YGMQ), glutamate 404, and arginine 471. Residues histidine 518 and glutamate 520 contribute to the active site.

It belongs to the CTP synthase family. In terms of assembly, homotetramer.

The catalysed reaction is UTP + L-glutamine + ATP + H2O = CTP + L-glutamate + ADP + phosphate + 2 H(+). It carries out the reaction L-glutamine + H2O = L-glutamate + NH4(+). The enzyme catalyses UTP + NH4(+) + ATP = CTP + ADP + phosphate + 2 H(+). The protein operates within pyrimidine metabolism; CTP biosynthesis via de novo pathway; CTP from UDP: step 2/2. Its activity is regulated as follows. Allosterically activated by GTP, when glutamine is the substrate; GTP has no effect on the reaction when ammonia is the substrate. The allosteric effector GTP functions by stabilizing the protein conformation that binds the tetrahedral intermediate(s) formed during glutamine hydrolysis. Inhibited by the product CTP, via allosteric rather than competitive inhibition. Functionally, catalyzes the ATP-dependent amination of UTP to CTP with either L-glutamine or ammonia as the source of nitrogen. Regulates intracellular CTP levels through interactions with the four ribonucleotide triphosphates. This chain is CTP synthase, found in Xanthomonas axonopodis pv. citri (strain 306).